Consider the following 101-residue polypeptide: Protein mes1 (101 aa).

The segment covering 1–19 (MVNTDNKENEPPNMEKAHM) has biased composition (basic and acidic residues). The disordered stretch occupies residues 1–101 (MVNTDNKENE…RSPNPLLSMR (101 aa)).

In terms of assembly, interacts with slp1.

It localises to the cytoplasm. Its subcellular location is the nucleus. Its function is as follows. Specifically required for meiosis II (MII). Binds to slp1, an activator of the anapahase promoting complex/cyclcosome (APC/C), and counteracts its function in promoting proteolysis of cdc13. By suppressing the degradation of cdc13 at anaphase I this protein may help maintain a sufficient level of cdc2 kinase activity to complete MII. This Schizosaccharomyces pombe (strain 972 / ATCC 24843) (Fission yeast) protein is Protein mes1 (mes1).